We begin with the raw amino-acid sequence, 45 residues long: Myotoxin-2 (45 aa).

Cystine bridges form between C4-C36, C11-C30, and C18-C37.

The protein belongs to the crotamine-myotoxin family. As to quaternary structure, monomer. In terms of tissue distribution, expressed by the venom gland.

The protein resides in the secreted. In terms of biological role, cationic peptide that possesses multiple functions. It acts as a cell-penetrating peptide (CPP), and as a potent voltage-gated potassium channel (Kv) inhibitor. It exhibits antimicrobial activities, hind limb paralysis, and severe muscle necrosis by a non-enzymatic mechanism. This Crotalus viridis viridis (Prairie rattlesnake) protein is Myotoxin-2.